A 268-amino-acid chain; its full sequence is Interleukin-1 alpha (268 aa).

Residues M1–R112 constitute a propeptide that is removed on maturation. K82 carries the post-translational modification N6-acetyllysine. The tract at residues K82–L86 is nuclear localization signal (NLS). Phosphoserine is present on S87. N-linked (GlcNAc...) asparagine glycans are attached at residues N102 and N141.

It belongs to the IL-1 family. Monomer. Interacts with TMED10; the interaction mediates the translocation from the cytoplasm into the ERGIC (endoplasmic reticulum-Golgi intermediate compartment) and thereby secretion. Interacts with IL1R1. Interacts with S100A13; this interaction is the first step in the export of IL1A, followed by direct translocation of this complex across the plasma membrane. Acetylated within its nuclear localization sequence, which impacts subcellular localization. In terms of processing, proteolytic processed by CAPN1 in a calcium-dependent manner. Cleavage from 31 kDa precursor to 18 kDa biologically active molecules. Post-translationally, phosphorylated. Phosphorylation greatly enhances susceptibility to digestion and promotes the conversion of pre-IL1A alpha to the biologically active IL1A.

The protein localises to the nucleus. It localises to the cytoplasm. Its subcellular location is the secreted. Functionally, cytokine constitutively present intracellularly in nearly all resting non-hematopoietic cells that plays an important role in inflammation and bridges the innate and adaptive immune systems. After binding to its receptor IL1R1 together with its accessory protein IL1RAP, forms the high affinity interleukin-1 receptor complex. Signaling involves the recruitment of adapter molecules such as MYD88, IRAK1 or IRAK4. In turn, mediates the activation of NF-kappa-B and the three MAPK pathways p38, p42/p44 and JNK pathways. Within the cell, acts as an alarmin and cell death results in its liberation in the extracellular space after disruption of the cell membrane to induce inflammation and alert the host to injury or damage. In addition to its role as a danger signal, which occurs when the cytokine is passively released by cell necrosis, directly senses DNA damage and acts as signal for genotoxic stress without loss of cell integrity. The polypeptide is Interleukin-1 alpha (IL1A) (Lama glama (Llama)).